The chain runs to 65 residues: Gallinacin-12 (65 aa).

The first 19 residues, 1-19, serve as a signal peptide directing secretion; sequence MRNLCFVFIFISLLAHGST. Disulfide bonds link cysteine 25–cysteine 54, cysteine 32–cysteine 47, and cysteine 37–cysteine 55.

It belongs to the beta-defensin family. As to expression, expressed in the large intestine, kidney liver, gall bladder, testis, ovary and male and female reproductive tracts. Expressed in the ovarian stroma and the theca and granulosa layers of the ovarian follicle.

It is found in the secreted. The protein localises to the cytoplasmic granule. Has bactericidal activity. In Gallus gallus (Chicken), this protein is Gallinacin-12 (GAL12).